Consider the following 302-residue polypeptide: Ribose-5-phosphate isomerase (302 aa).

This sequence belongs to the ribose 5-phosphate isomerase family.

Its subcellular location is the cytoplasm. It carries out the reaction aldehydo-D-ribose 5-phosphate = D-ribulose 5-phosphate. It participates in carbohydrate degradation; pentose phosphate pathway; D-ribose 5-phosphate from D-ribulose 5-phosphate (non-oxidative stage): step 1/1. The chain is Ribose-5-phosphate isomerase (RKI1) from Cryptococcus neoformans var. neoformans serotype D (strain B-3501A) (Filobasidiella neoformans).